Here is a 181-residue protein sequence, read N- to C-terminus: Bradykinin potentiating and C-type natriuretic peptides (181 aa).

An N-terminal signal peptide occupies residues 1-23 (MFVSRLAASGLLLLALLAVSLDG). Positions 24 to 27 (KPLQ) are excised as a propeptide. Residues Gln28 and Gln31 each carry the pyrrolidone carboxylic acid modification. A propeptide spanning residues 41-43 (LVV) is cleaved from the precursor. A Pyrrolidone carboxylic acid modification is found at Gln44. The propeptide occupies 50-52 (TQL). A Pyrrolidone carboxylic acid modification is found at Gln53. A propeptide spanning residues 59–159 (AGGTTALREE…ARRLKGLAKK (101 aa)) is cleaved from the precursor. Residues 74–150 (EAALDTPPAG…GGGCGGGGGA (77 aa)) form a disordered region. The segment covering 104 to 114 (SKGASATSAAS) has biased composition (low complexity). Over residues 140 to 150 (AGGGCGGGGGA) the composition is skewed to gly residues. The cysteines at positions 165 and 181 are disulfide-linked.

This sequence in the N-terminal section; belongs to the bradykinin-potentiating peptide family. It in the C-terminal section; belongs to the natriuretic peptide family. In terms of tissue distribution, venom gland.

It is found in the secreted. In terms of biological role, bradykinin-potentiating peptide both inhibits the activity of the angiotensin-converting enzyme (ACE) and enhances the action of bradykinin by inhibiting the peptidases that inactivate it. It acts as an indirect hypotensive agent. Synthetic Cdt1a, Cdt1b and the short hexapeptide Cdt3 are able to potentiate the hypotensive effect mediated by Bk on the blood pressure of anesthetized rats. Has a vasorelaxant activity in rat aortic strips and a diuretic potency in anesthetized rats. May act by activating natriuretic receptors (NPR1 and/or NPR2). This Crotalus durissus terrificus (South American rattlesnake) protein is Bradykinin potentiating and C-type natriuretic peptides.